The primary structure comprises 403 residues: D-galactonate dehydratase family member RspA (403 aa).

Residues Asn37 and His122 each coordinate substrate. The active-site Proton donor/acceptor is the Tyr159. Residue Asp211 participates in Mg(2+) binding. The active-site Proton donor/acceptor is the His213. Glu237 and Glu263 together coordinate Mg(2+). Positions 263, 284, 313, 317, and 340 each coordinate substrate.

This sequence belongs to the mandelate racemase/muconate lactonizing enzyme family. GalD subfamily. Requires Mg(2+) as cofactor.

The catalysed reaction is D-mannonate = 2-dehydro-3-deoxy-D-gluconate + H2O. It carries out the reaction D-gluconate = 2-dehydro-3-deoxy-D-gluconate + H2O. Has low dehydratase activity with D-mannonate and D-gluconate, suggesting that these are not physiological substrates and that it has no significant role in the in vivo degradation of these compounds. Has no detectable activity with a panel of 70 other acid sugars (in vitro). This Halomonas elongata (strain ATCC 33173 / DSM 2581 / NBRC 15536 / NCIMB 2198 / 1H9) protein is D-galactonate dehydratase family member RspA (rspA).